The following is a 79-amino-acid chain: uncharacterized protein (79 aa).

This is an uncharacterized protein from Bacillus subtilis (strain 168).